The sequence spans 803 residues: Na(+)/H(+) antiporter subunit A1 (803 aa).

Helical transmembrane passes span 1–21 (MSLL…IPIL), 30–50 (LGWF…SLIS), 79–99 (LSIL…LYSI), 117–137 (LFMG…LYLF), 166–186 (LIIT…ISLA), 208–228 (FIFA…QVPF), 265–285 (LFAI…ITLF), 300–320 (ILAF…GIGA), 337–357 (FTAA…LFMI), 377–397 (LTIM…MAGI), 427–447 (LGIV…VYSI), 472–492 (ILML…GLFP), 522–542 (GITP…LLLL), 591–611 (LVII…SVPF), 621–641 (IHIY…MVVI), 646–666 (LFSV…FVFF), 671–691 (LALT…LCFY), 707–727 (LTNA…GLIA), and 764–784 (MDTL…YTMI).

This sequence belongs to the CPA3 antiporters (TC 2.A.63) subunit A family. In terms of assembly, may form a heterooligomeric complex that consists of seven subunits: mnhA1, mnhB1, mnhC1, mnhD1, mnhE1, mnhF1 and mnhG1.

It localises to the cell membrane. Mnh complex is a Na(+)/H(+) antiporter involved in Na(+) excretion. This is Na(+)/H(+) antiporter subunit A1 (mnhA1) from Staphylococcus haemolyticus (strain JCSC1435).